The primary structure comprises 154 residues: Probable prefoldin subunit 5 (154 aa).

This sequence belongs to the prefoldin subunit alpha family. Heterohexamer of two PFD-alpha type and four PFD-beta type subunits.

Its function is as follows. Binds specifically to cytosolic chaperonin (c-CPN) and transfers target proteins to it. Binds to nascent polypeptide chain and promotes folding in an environment in which there are many competing pathways for nonnative proteins. This Caenorhabditis briggsae protein is Probable prefoldin subunit 5.